Reading from the N-terminus, the 127-residue chain is Modulator protein MzrA (127 aa).

At 1–11 (MRKPRVTLRHL) the chain is on the cytoplasmic side. A helical membrane pass occupies residues 12 to 31 (AWSTMLLMVLGTGMLFWSAV). The Periplasmic portion of the chain corresponds to 32–127 (RQQESTLAIR…RLRDAPHRMG (96 aa)).

The protein belongs to the MzrA family. As to quaternary structure, interacts with EnvZ.

It is found in the cell inner membrane. Functionally, modulates the activity of the EnvZ/OmpR two-component regulatory system, probably by directly modulating EnvZ enzymatic activity and increasing stability of phosphorylated OmpR. The sequence is that of Modulator protein MzrA from Citrobacter rodentium (strain ICC168) (Citrobacter freundii biotype 4280).